The primary structure comprises 124 residues: Small ribosomal subunit protein uS12 (124 aa).

Asp89 carries the 3-methylthioaspartic acid modification.

This sequence belongs to the universal ribosomal protein uS12 family. In terms of assembly, part of the 30S ribosomal subunit. Contacts proteins S8 and S17. May interact with IF1 in the 30S initiation complex.

With S4 and S5 plays an important role in translational accuracy. Functionally, interacts with and stabilizes bases of the 16S rRNA that are involved in tRNA selection in the A site and with the mRNA backbone. Located at the interface of the 30S and 50S subunits, it traverses the body of the 30S subunit contacting proteins on the other side and probably holding the rRNA structure together. The combined cluster of proteins S8, S12 and S17 appears to hold together the shoulder and platform of the 30S subunit. The sequence is that of Small ribosomal subunit protein uS12 from Shewanella piezotolerans (strain WP3 / JCM 13877).